The sequence spans 464 residues: Soluble pyridine nucleotide transhydrogenase (464 aa).

35-44 is a binding site for FAD; it reads DSRRQVGGNC.

It belongs to the class-I pyridine nucleotide-disulfide oxidoreductase family. FAD is required as a cofactor.

The protein localises to the cytoplasm. It catalyses the reaction NAD(+) + NADPH = NADH + NADP(+). Functionally, conversion of NADPH, generated by peripheral catabolic pathways, to NADH, which can enter the respiratory chain for energy generation. This is Soluble pyridine nucleotide transhydrogenase from Pseudomonas fluorescens (strain Pf0-1).